A 510-amino-acid chain; its full sequence is NAD(P)H-quinone oxidoreductase subunit 2 B, chloroplastic (510 aa).

13 helical membrane passes run 24–44 (LLLF…GLIL), 57–77 (IPWL…ALLF), 99–119 (IFQF…VEYI), 124–144 (MAIT…MFLC), 149–169 (LITI…LSGY), 183–203 (YLLM…WLYG), 227–247 (PGIS…LSPA), 295–315 (WHLL…LIAI), 323–343 (MLAY…IVGD), 354–374 (YMLF…LFGL), 395–415 (ALSL…AGFF), 418–438 (LYLF…IGLL), and 484–504 (MIVC…IIAI).

The protein belongs to the complex I subunit 2 family. NDH is composed of at least 16 different subunits, 5 of which are encoded in the nucleus.

It is found in the plastid. The protein localises to the chloroplast thylakoid membrane. The catalysed reaction is a plastoquinone + NADH + (n+1) H(+)(in) = a plastoquinol + NAD(+) + n H(+)(out). It carries out the reaction a plastoquinone + NADPH + (n+1) H(+)(in) = a plastoquinol + NADP(+) + n H(+)(out). Functionally, NDH shuttles electrons from NAD(P)H:plastoquinone, via FMN and iron-sulfur (Fe-S) centers, to quinones in the photosynthetic chain and possibly in a chloroplast respiratory chain. The immediate electron acceptor for the enzyme in this species is believed to be plastoquinone. Couples the redox reaction to proton translocation, and thus conserves the redox energy in a proton gradient. This chain is NAD(P)H-quinone oxidoreductase subunit 2 B, chloroplastic, found in Helianthus annuus (Common sunflower).